The chain runs to 72 residues: Translation initiation factor IF-1 (72 aa).

The region spanning 1-72 (MSKDDVIQMQ…SRARIVFRAK (72 aa)) is the S1-like domain.

The protein belongs to the IF-1 family. As to quaternary structure, component of the 30S ribosomal translation pre-initiation complex which assembles on the 30S ribosome in the order IF-2 and IF-3, IF-1 and N-formylmethionyl-tRNA(fMet); mRNA recruitment can occur at any time during PIC assembly.

The protein resides in the cytoplasm. One of the essential components for the initiation of protein synthesis. Stabilizes the binding of IF-2 and IF-3 on the 30S subunit to which N-formylmethionyl-tRNA(fMet) subsequently binds. Helps modulate mRNA selection, yielding the 30S pre-initiation complex (PIC). Upon addition of the 50S ribosomal subunit IF-1, IF-2 and IF-3 are released leaving the mature 70S translation initiation complex. The sequence is that of Translation initiation factor IF-1 from Methylibium petroleiphilum (strain ATCC BAA-1232 / LMG 22953 / PM1).